Here is a 237-residue protein sequence, read N- to C-terminus: MRSGVIAQKLGMTRVYNDAGEHVPVTVLRMENCHVVAQRTVEKNGYTAVQLGVGVAKVKNTSKAMRGHFAKAEVEPKAKLAEFRVSPDNLLEVGVEITAEHFVAGQKVDVTGTSIGKGFAGVMKRHNFGGHRASHGNSITHRSHGSTGQRQDPGKVFKGKKMAGHMGQTRVTTQNIEVVSTDSDRGLILVRGAVPGSKGAWILVRDAVKASLPENAPKPAGLRAGAKAEAAATEGAE.

Disordered stretches follow at residues 133–155 and 213–237; these read ASHG…DPGK and PENA…EGAE. Over residues 135 to 150 the composition is skewed to polar residues; that stretch reads HGNSITHRSHGSTGQR. Gln-151 is subject to N5-methylglutamine. Over residues 220–237 the composition is skewed to low complexity; sequence AGLRAGAKAEAAATEGAE.

Belongs to the universal ribosomal protein uL3 family. As to quaternary structure, part of the 50S ribosomal subunit. Forms a cluster with proteins L14 and L19. In terms of processing, methylated by PrmB.

Its function is as follows. One of the primary rRNA binding proteins, it binds directly near the 3'-end of the 23S rRNA, where it nucleates assembly of the 50S subunit. This Brucella suis biovar 1 (strain 1330) protein is Large ribosomal subunit protein uL3.